The primary structure comprises 800 residues: Receptor like protein 26 (800 aa).

Residues Met-1–Ser-19 form the signal peptide. Topologically, residues Phe-20–Lys-733 are extracellular. 6 N-linked (GlcNAc...) asparagine glycosylation sites follow: Asn-49, Asn-61, Asn-83, Asn-96, Asn-101, and Asn-113. 12 LRR repeats span residues Leu-89 to Asn-113, Thr-115 to Leu-138, Ile-139 to Leu-161, Thr-162 to Thr-185, Pro-187 to Ser-212, Leu-214 to Leu-235, Ile-236 to Pro-259, Leu-260 to Asp-281, Pro-285 to Thr-307, Leu-308 to Leu-332, Arg-334 to Asn-357, and Ser-358 to Ser-381. 2 N-linked (GlcNAc...) asparagine glycosylation sites follow: Asn-145 and Asn-160. Asn-207 carries N-linked (GlcNAc...) asparagine glycosylation. An N-linked (GlcNAc...) asparagine glycan is attached at Asn-247. 2 N-linked (GlcNAc...) asparagine glycosylation sites follow: Asn-342 and Asn-357. The LRR 13; degenerate repeat unit spans residues Ile-382 to Asn-401. Asn-388 and Asn-401 each carry an N-linked (GlcNAc...) asparagine glycan. LRR repeat units follow at residues Arg-402–Leu-423, Ser-424–Ser-446, Ala-448–Cys-471, Ser-472–Ala-494, Leu-495–Pro-519, Phe-522–Asn-546, Leu-591–Leu-615, Lys-616–Val-639, Thr-640–Leu-663, and Phe-665–Gly-688. N-linked (GlcNAc...) asparagine glycosylation is present at Asn-470. Asn-622 and Asn-638 each carry an N-linked (GlcNAc...) asparagine glycan. A helical transmembrane segment spans residues Ala-734–Ala-754. At Ser-755–Ile-800 the chain is on the cytoplasmic side.

Belongs to the RLP family.

Its subcellular location is the cell membrane. In Arabidopsis thaliana (Mouse-ear cress), this protein is Receptor like protein 26.